Here is a 296-residue protein sequence, read N- to C-terminus: Phosphoribosylaminoimidazole-succinocarboxamide synthase (296 aa).

It belongs to the SAICAR synthetase family.

It carries out the reaction 5-amino-1-(5-phospho-D-ribosyl)imidazole-4-carboxylate + L-aspartate + ATP = (2S)-2-[5-amino-1-(5-phospho-beta-D-ribosyl)imidazole-4-carboxamido]succinate + ADP + phosphate + 2 H(+). It functions in the pathway purine metabolism; IMP biosynthesis via de novo pathway; 5-amino-1-(5-phospho-D-ribosyl)imidazole-4-carboxamide from 5-amino-1-(5-phospho-D-ribosyl)imidazole-4-carboxylate: step 1/2. The polypeptide is Phosphoribosylaminoimidazole-succinocarboxamide synthase (Thioalkalivibrio sulfidiphilus (strain HL-EbGR7)).